A 346-amino-acid chain; its full sequence is MTYNIVALPGDGIGPEILSGTLELLELISKKYKFDYQLTSYDFGGAAIDSHGVPLPDDTLNACKNADAILLGAVGGPQWTDPNNRPEQGLLALRKSLGLFANIRPTKVTEGTSHFSPIKESRVKGTDFIIVRELTSGLYFGEPRHIDNQSALDSLTYTKKEIERIAMVAFELASQRKKKLTSVDKENVLATSKLWRKTINEISHEFPDVKVNHLLVDACSMQLISQPTNFDVIVTENLFGDILSDEASTIPGSLGLSPSASFSLEGPRLYEPIHGSAPDIANQNLANPFGMILSLAMCLRESFNFEDAASELEQAVYQLIKDGKTTKDLNGHYTTSDIFNELKKNY.

NAD(+) is bound at residue 76-87 (GPQWTDPNNRPE). Residues R94, R104, R132, and D217 each contribute to the substrate site. Residues D217, D241, and D245 each coordinate Mg(2+). 275 to 287 (GSAPDIANQNLAN) is a binding site for NAD(+).

This sequence belongs to the isocitrate and isopropylmalate dehydrogenases family. LeuB type 1 subfamily. In terms of assembly, homodimer. The cofactor is Mg(2+). Mn(2+) serves as cofactor.

It localises to the cytoplasm. The catalysed reaction is (2R,3S)-3-isopropylmalate + NAD(+) = 4-methyl-2-oxopentanoate + CO2 + NADH. It functions in the pathway amino-acid biosynthesis; L-leucine biosynthesis; L-leucine from 3-methyl-2-oxobutanoate: step 3/4. In terms of biological role, catalyzes the oxidation of 3-carboxy-2-hydroxy-4-methylpentanoate (3-isopropylmalate) to 3-carboxy-4-methyl-2-oxopentanoate. The product decarboxylates to 4-methyl-2 oxopentanoate. This chain is 3-isopropylmalate dehydrogenase, found in Staphylococcus haemolyticus (strain JCSC1435).